The following is a 285-amino-acid chain: Putative sugar uptake protein lp_2503 (285 aa).

Helical transmembrane passes span 2–21, 31–48, 55–72, 112–134, 147–169, 179–196, 209–228, 233–255, and 264–283; these read GILI…LISG, TLGM…LWAV, SKIW…SIGQ, GNMY…LTSL, NWGV…TIVV, VVMP…IWSF, NIVT…MAMA, AVAY…YLLG, and VYVV…LSLM.

Belongs to the GRP transporter (TC 2.A.7.5) family.

It localises to the cell membrane. This chain is Putative sugar uptake protein lp_2503, found in Lactiplantibacillus plantarum (strain ATCC BAA-793 / NCIMB 8826 / WCFS1) (Lactobacillus plantarum).